The chain runs to 760 residues: Striatin-4 (760 aa).

The segment at 1–65 (MMEERAAAAV…PTAGPEPLSL (65 aa)) is disordered. Low complexity predominate over residues 7 to 35 (AAAVASAASSCRPLGSGTAPNPTAAAPAS). Residues 43 to 54 (PVGKGGGGGGSP) are compositionally biased toward gly residues. Ser-53 bears the Phosphoserine mark. Residues 69-136 (LHFIQHEWAR…QERAKYHKLK (68 aa)) are a coiled coil. Residues 71–79 (FIQHEWARF) form a caveolin-binding region. The tract at residues 165–182 (ENSPLVWKEGRQLLRQYL) is calmodulin-binding. Phosphoserine occurs at positions 206, 223, and 276. Disordered regions lie at residues 210 to 233 (NGAGEPVEGAPRASPGPGGLSGGE) and 272 to 346 (EDED…PHEL). Acidic residues-rich tracts occupy residues 272-283 (EDEDSDEDDELD) and 302-317 (EMEDEDEEDDSEDAIN). Residues 332-346 (PDPRRCTSEGNPHEL) are compositionally biased toward basic and acidic residues. WD repeat units lie at residues 443 to 482 (SHYDGIRSLAFHHSQSALLTASEDGTLKLWNLQKAVTAKK), 496 to 535 (AHRGPVLAVTMGSNSEYCYSGGADARIHSWKIPDLNMDPY), 549 to 588 (GHGDAVWGLAFSPTSQRLASCSADGTVRIWDPSSSGPSCL), 595 to 635 (GEHG…ALLT), 642 to 681 (SGPAQINQVVSHPSQPLTITAHDDRGIRFLDNRTGKSVHS), 684 to 723 (AHLDAVTCLAVDPNGVFLMSGSHDCSLRLWSLDNKTCVQE), and 730 to 759 (KHEEAIHAVACHPSKALIASAGADALAKVF).

Belongs to the WD repeat striatin family. Part of the core of STRIPAK complexes composed of PP2A catalytic and scaffolding subunits, the striatins (PP2A regulatory subunits), the striatin-associated proteins MOB4, STRIP1 and STRIP2, PDCD10 and members of the STE20 kinases, such as STK24 and STK26. Interacts with CTTNBP2NL. Mainly expressed in brain but is also expressed at low levels in the kidney.

The protein localises to the cytoplasm. It is found in the membrane. Its subcellular location is the cell projection. It localises to the dendritic spine. Its function is as follows. Calmodulin-binding scaffolding protein which is the center of the striatin-interacting phosphatase and kinase (STRIPAK) complexes. STRIPAK complexes have critical roles in protein (de)phosphorylation and are regulators of multiple signaling pathways including Hippo, MAPK, nuclear receptor and cytoskeleton remodeling. Different types of STRIPAK complexes are involved in a variety of biological processes such as cell growth, differentiation, apoptosis, metabolism and immune regulation. Key regulator of the expanded Hippo signaling pathway by interacting and allowing the inhibition of MAP4K kinases by the STRIPAK complex. This chain is Striatin-4 (Strn4), found in Mus musculus (Mouse).